The primary structure comprises 508 residues: Photosystem II CP47 reaction center protein (508 aa).

6 consecutive transmembrane segments (helical) span residues 21–36 (AVHI…WAGS), 101–115 (IVFS…IWHW), 140–156 (GIHL…FGAF), 203–218 (IAAG…FHLS), 237–252 (VLSS…AFVV), and 457–472 (SFAL…HGAR).

Belongs to the PsbB/PsbC family. PsbB subfamily. PSII is composed of 1 copy each of membrane proteins PsbA, PsbB, PsbC, PsbD, PsbE, PsbF, PsbH, PsbI, PsbJ, PsbK, PsbL, PsbM, PsbT, PsbX, PsbY, PsbZ, Psb30/Ycf12, at least 3 peripheral proteins of the oxygen-evolving complex and a large number of cofactors. It forms dimeric complexes. Interacts with PAM68. Interacts with HHL1. The cofactor is Binds multiple chlorophylls. PSII binds additional chlorophylls, carotenoids and specific lipids..

The protein resides in the plastid. It is found in the chloroplast thylakoid membrane. Its function is as follows. One of the components of the core complex of photosystem II (PSII). It binds chlorophyll and helps catalyze the primary light-induced photochemical processes of PSII. PSII is a light-driven water:plastoquinone oxidoreductase, using light energy to abstract electrons from H(2)O, generating O(2) and a proton gradient subsequently used for ATP formation. This chain is Photosystem II CP47 reaction center protein, found in Arabidopsis thaliana (Mouse-ear cress).